The sequence spans 268 residues: 4-hydroxy-tetrahydrodipicolinate reductase (268 aa).

NAD(+)-binding positions include 8-13 (GGGGKM) and E34. K35 contacts NADP(+). NAD(+)-binding positions include 98–100 (GST) and 122–125 (APNM). H155 (proton donor/acceptor) is an active-site residue. H156 contacts (S)-2,3,4,5-tetrahydrodipicolinate. The Proton donor role is filled by K159. Residue 165–166 (GT) coordinates (S)-2,3,4,5-tetrahydrodipicolinate.

This sequence belongs to the DapB family.

The protein localises to the cytoplasm. The catalysed reaction is (S)-2,3,4,5-tetrahydrodipicolinate + NAD(+) + H2O = (2S,4S)-4-hydroxy-2,3,4,5-tetrahydrodipicolinate + NADH + H(+). It catalyses the reaction (S)-2,3,4,5-tetrahydrodipicolinate + NADP(+) + H2O = (2S,4S)-4-hydroxy-2,3,4,5-tetrahydrodipicolinate + NADPH + H(+). The protein operates within amino-acid biosynthesis; L-lysine biosynthesis via DAP pathway; (S)-tetrahydrodipicolinate from L-aspartate: step 4/4. In terms of biological role, catalyzes the conversion of 4-hydroxy-tetrahydrodipicolinate (HTPA) to tetrahydrodipicolinate. The polypeptide is 4-hydroxy-tetrahydrodipicolinate reductase (Syntrophus aciditrophicus (strain SB)).